The following is a 245-amino-acid chain: MAASGSRHPPISDDATSFAAQRERMVAQQISARGVRDPLVLAAMRQVPREAFLPERMRDLAYDDSPLPIGHGQTISQPYIVAAMIEALQLNGGERVLEIGAGSGYAAAVLAQIAGEVTTIERIGALADKAAAALAALGIGNVQVRQGDGSRGWPPGAPYDAIVVAAGGPHLPQSLKTQLAIGGRLVMPVGADQSAQRLVRLTRTSVDDVRCEQLADVRFVPLIGDEGWASVAPEPRADRPATVRK.

The active site involves Ser-76.

Belongs to the methyltransferase superfamily. L-isoaspartyl/D-aspartyl protein methyltransferase family.

Its subcellular location is the cytoplasm. It carries out the reaction [protein]-L-isoaspartate + S-adenosyl-L-methionine = [protein]-L-isoaspartate alpha-methyl ester + S-adenosyl-L-homocysteine. In terms of biological role, catalyzes the methyl esterification of L-isoaspartyl residues in peptides and proteins that result from spontaneous decomposition of normal L-aspartyl and L-asparaginyl residues. It plays a role in the repair and/or degradation of damaged proteins. In Rhodopseudomonas palustris (strain HaA2), this protein is Protein-L-isoaspartate O-methyltransferase 1.